We begin with the raw amino-acid sequence, 1000 residues long: uncharacterized protein (1000 aa).

A compositionally biased stretch (basic and acidic residues) spans 787 to 809 (RQYEKLKRQRAKSETERHQERHG). The disordered stretch occupies residues 787–812 (RQYEKLKRQRAKSETERHQERHGKLS).

This is an uncharacterized protein from Picosynechococcus sp. (strain ATCC 27264 / PCC 7002 / PR-6) (Agmenellum quadruplicatum).